A 147-amino-acid polypeptide reads, in one-letter code: Epididymal secretory protein E3-beta (147 aa).

The signal sequence occupies residues 1-25 (MASSLKIWGTLLALLCILCTLLVQS).

In terms of tissue distribution, epididymis.

The protein localises to the secreted. Possible function in sperm maturation. The protein is Epididymal secretory protein E3-beta (EDDM3B) of Homo sapiens (Human).